A 134-amino-acid polypeptide reads, in one-letter code: Profilin-2 (134 aa).

A disulfide bridge links cysteine 13 with cysteine 118. The short motif at 84–100 (AVIRGKKGSGGITIKKT) is the Involved in PIP2 interaction element. Threonine 114 bears the Phosphothreonine mark.

Belongs to the profilin family. In terms of assembly, occurs in many kinds of cells as a complex with monomeric actin in a 1:1 ratio. Phosphorylated by MAP kinases.

The protein resides in the cytoplasm. It localises to the cytoskeleton. Its function is as follows. Binds to actin and affects the structure of the cytoskeleton. At high concentrations, profilin prevents the polymerization of actin, whereas it enhances it at low concentrations. The protein is Profilin-2 of Olea europaea (Common olive).